The sequence spans 338 residues: Protein RecA (338 aa).

66 to 73 (GPESSGKT) lines the ATP pocket.

Belongs to the RecA family.

The protein localises to the cytoplasm. Functionally, can catalyze the hydrolysis of ATP in the presence of single-stranded DNA, the ATP-dependent uptake of single-stranded DNA by duplex DNA, and the ATP-dependent hybridization of homologous single-stranded DNAs. It interacts with LexA causing its activation and leading to its autocatalytic cleavage. This is Protein RecA from Geobacter sulfurreducens (strain ATCC 51573 / DSM 12127 / PCA).